The following is a 143-amino-acid chain: Large ribosomal subunit protein uL11 (143 aa).

This sequence belongs to the universal ribosomal protein uL11 family. Part of the ribosomal stalk of the 50S ribosomal subunit. Interacts with L10 and the large rRNA to form the base of the stalk. L10 forms an elongated spine to which L12 dimers bind in a sequential fashion forming a multimeric L10(L12)X complex. Post-translationally, one or more lysine residues are methylated.

Forms part of the ribosomal stalk which helps the ribosome interact with GTP-bound translation factors. In Pseudomonas paraeruginosa (strain DSM 24068 / PA7) (Pseudomonas aeruginosa (strain PA7)), this protein is Large ribosomal subunit protein uL11.